The following is a 403-amino-acid chain: DNA replication and repair protein RecF (403 aa).

Residue 30-37 (GSNGLGKT) participates in ATP binding.

This sequence belongs to the RecF family.

The protein localises to the cytoplasm. In terms of biological role, the RecF protein is involved in DNA metabolism; it is required for DNA replication and normal SOS inducibility. RecF binds preferentially to single-stranded, linear DNA. It also seems to bind ATP. In Bifidobacterium adolescentis (strain ATCC 15703 / DSM 20083 / NCTC 11814 / E194a), this protein is DNA replication and repair protein RecF.